A 239-amino-acid chain; its full sequence is Serine protease SplF (239 aa).

The first 36 residues, 1–36, serve as a signal peptide directing secretion; that stretch reads MNKNIIIKSIAALTILTSITGVGTTMVEGIQQTAKA. Catalysis depends on charge relay system residues histidine 75, aspartate 114, and serine 192.

Belongs to the peptidase S1B family.

The protein localises to the secreted. The chain is Serine protease SplF (splF) from Staphylococcus aureus (strain NCTC 8325 / PS 47).